We begin with the raw amino-acid sequence, 109 residues long: Nucleoid-associated protein A1S_1684 (109 aa).

The protein belongs to the YbaB/EbfC family. Homodimer.

The protein resides in the cytoplasm. Its subcellular location is the nucleoid. Functionally, binds to DNA and alters its conformation. May be involved in regulation of gene expression, nucleoid organization and DNA protection. In Acinetobacter baumannii (strain ATCC 17978 / DSM 105126 / CIP 53.77 / LMG 1025 / NCDC KC755 / 5377), this protein is Nucleoid-associated protein A1S_1684.